A 67-amino-acid chain; its full sequence is Large ribosomal subunit protein bL35 (67 aa).

This sequence belongs to the bacterial ribosomal protein bL35 family.

This chain is Large ribosomal subunit protein bL35, found in Allorhizobium ampelinum (strain ATCC BAA-846 / DSM 112012 / S4) (Agrobacterium vitis (strain S4)).